The sequence spans 275 residues: Probable ABC transporter permease protein NosY (275 aa).

Transmembrane regions (helical) follow at residues 20 to 40, 60 to 80, 111 to 131, 146 to 166, 179 to 199, and 250 to 270; these read WLLA…WFGA, SLAT…AIVG, ILAL…LALV, FMGS…ALSS, LGLW…ILVL, and ALWL…HGLF.

In terms of assembly, the complex may be composed of an ATP-binding protein (NosF), a transmembrane protein (NosY) and a solute-binding protein (NosD).

The protein resides in the cell inner membrane. Its function is as follows. Required for the assembly of the copper chromophores of nitrous oxide reductase. Could be part of the ABC transporter complex NosDFY. The chain is Probable ABC transporter permease protein NosY (nosY) from Pseudomonas aeruginosa (strain ATCC 15692 / DSM 22644 / CIP 104116 / JCM 14847 / LMG 12228 / 1C / PRS 101 / PAO1).